Consider the following 444-residue polypeptide: Glutamate--tRNA ligase 1 (444 aa).

A 'HIGH' region motif is present at residues 7–17; sequence PSPTGYLHVGN. Positions 238 to 242 match the 'KMSKS' region motif; that stretch reads KISKR. Lys241 provides a ligand contact to ATP.

The protein belongs to the class-I aminoacyl-tRNA synthetase family. Glutamate--tRNA ligase type 1 subfamily. Monomer.

It localises to the cytoplasm. It carries out the reaction tRNA(Glu) + L-glutamate + ATP = L-glutamyl-tRNA(Glu) + AMP + diphosphate. Functionally, catalyzes the attachment of glutamate to tRNA(Glu) in a two-step reaction: glutamate is first activated by ATP to form Glu-AMP and then transferred to the acceptor end of tRNA(Glu). The chain is Glutamate--tRNA ligase 1 from Wolbachia pipientis subsp. Culex pipiens (strain wPip).